Consider the following 197-residue polypeptide: Ribonuclease HII (197 aa).

The region spanning 11–197 is the RNase H type-2 domain; the sequence is GRIAGVDEVG…FGPVKRVLGL (187 aa). A divalent metal cation is bound by residues Asp-17, Glu-18, and Asp-109.

It belongs to the RNase HII family. Mn(2+) is required as a cofactor. It depends on Mg(2+) as a cofactor.

It is found in the cytoplasm. The enzyme catalyses Endonucleolytic cleavage to 5'-phosphomonoester.. In terms of biological role, endonuclease that specifically degrades the RNA of RNA-DNA hybrids. The protein is Ribonuclease HII of Edwardsiella ictaluri (strain 93-146).